A 242-amino-acid polypeptide reads, in one-letter code: 3-oxoacyl-[acyl-carrier-protein] reductase FabG (242 aa).

Residues 10-13 (GSTR), threonine 35, 57-58 (NV), and asparagine 84 contribute to the NADP(+) site. Serine 136 provides a ligand contact to substrate. The active-site Proton acceptor is tyrosine 149. NADP(+) contacts are provided by residues 149 to 153 (YCAAK) and isoleucine 182.

The protein belongs to the short-chain dehydrogenases/reductases (SDR) family. Homotetramer.

It catalyses the reaction a (3R)-hydroxyacyl-[ACP] + NADP(+) = a 3-oxoacyl-[ACP] + NADPH + H(+). It functions in the pathway lipid metabolism; fatty acid biosynthesis. Functionally, catalyzes the NADPH-dependent reduction of beta-ketoacyl-ACP substrates to beta-hydroxyacyl-ACP products, the first reductive step in the elongation cycle of fatty acid biosynthesis. The sequence is that of 3-oxoacyl-[acyl-carrier-protein] reductase FabG (fabG) from Haemophilus influenzae (strain ATCC 51907 / DSM 11121 / KW20 / Rd).